Reading from the N-terminus, the 186-residue chain is Alkyl hydroperoxide reductase AhpD (186 aa).

Cys132 acts as the Proton donor in catalysis. A disulfide bridge links Cys132 with Cys135. The Cysteine sulfenic acid (-SOH) intermediate role is filled by Cys135.

It belongs to the AhpD family.

It catalyses the reaction N(6)-[(R)-dihydrolipoyl]-L-lysyl-[lipoyl-carrier protein] + a hydroperoxide = N(6)-[(R)-lipoyl]-L-lysyl-[lipoyl-carrier protein] + an alcohol + H2O. In terms of biological role, antioxidant protein with alkyl hydroperoxidase activity. Required for the reduction of the AhpC active site cysteine residues and for the regeneration of the AhpC enzyme activity. The polypeptide is Alkyl hydroperoxide reductase AhpD (Anaeromyxobacter dehalogenans (strain 2CP-1 / ATCC BAA-258)).